The following is a 279-amino-acid chain: DegV domain-containing protein SAR1438 (279 aa).

Residues Q4 to K278 enclose the DegV domain. 2 residues coordinate hexadecanoate: T61 and S93.

In terms of biological role, may bind long-chain fatty acids, such as palmitate, and may play a role in lipid transport or fatty acid metabolism. This Staphylococcus aureus (strain MRSA252) protein is DegV domain-containing protein SAR1438.